The chain runs to 481 residues: MMRSDISNQISQELNNTNINLNGKSFNDYKFKEPIKDYSRYLSLRNSTPCQLTEVEISTFLASSEILSFGAGIPSKLFFPIKELEFNFNFLGNEKVRLSKEDLDLVQQYSDSPGLPKLRNWCKSIQQRHHGLCDPNTPGKEWNLLMTPGSQHALDCLVKAFFNRGDTLIVERYTYGGMFAVTQPSGINFAACEMDSKGMIPSELDNLLSNWESTHPDLKFPKLIYMIPHGQNPTGILYDMERKEEIYKIACKFDLLIIEDDPHFFLQLDNEIVNGKRVLNKSFLSIDKEDRVIRLDTFSKFLSSGIRMGFVTTNSKLFGVIAFELNASIFHSSGLTQIALEKLLTNWGDEKFDSHVNFVQEVLIRKRRETIELLEKHLKGQVEYSVPKAGLYFWVKLLGIDCSYEFVRDVLRHHKVIFGLGISSSPNRTIKTPYIRVTFSYLEKEDGEVAFKTLSDCLKDYIKNKKIIKHDEDVTLYNNIS.

Lys-300 bears the N6-(pyridoxal phosphate)lysine mark.

The protein belongs to the class-I pyridoxal-phosphate-dependent aminotransferase family. It depends on pyridoxal 5'-phosphate as a cofactor.

It is found in the cytoplasm. The enzyme catalyses an aromatic L-alpha-amino acid + 2-oxoglutarate = an aromatic oxo-acid + L-glutamate. Its function is as follows. Has aromatic amino acid transaminase activity. The polypeptide is Aromatic amino acid aminotransferase DDB_G0272014 (Dictyostelium discoideum (Social amoeba)).